Here is a 484-residue protein sequence, read N- to C-terminus: Glycogen synthase 2 (484 aa).

R15 provides a ligand contact to ADP-alpha-D-glucose.

Belongs to the glycosyltransferase 1 family. Bacterial/plant glycogen synthase subfamily.

It catalyses the reaction [(1-&gt;4)-alpha-D-glucosyl](n) + ADP-alpha-D-glucose = [(1-&gt;4)-alpha-D-glucosyl](n+1) + ADP + H(+). Its pathway is glycan biosynthesis; glycogen biosynthesis. Its function is as follows. Synthesizes alpha-1,4-glucan chains using ADP-glucose. This is Glycogen synthase 2 from Geobacter sulfurreducens (strain ATCC 51573 / DSM 12127 / PCA).